Here is a 744-residue protein sequence, read N- to C-terminus: Vesicle-fusing ATPase (744 aa).

Residue Lys105 is modified to N6-acetyllysine. Ser207 carries the post-translational modification Phosphoserine. A Phosphotyrosine modification is found at Tyr259. Residues 505–510 (NGIIKW) and 545–552 (PHSGKTAL) contribute to the ATP site. A Mg(2+)-binding site is contributed by Thr550. Position 569 is a phosphoserine; by CDK16 (Ser569).

It belongs to the AAA ATPase family. In terms of assembly, homohexamer. Interacts with GABARAP and GABARAPL2. Interacts with GRIA2. Interacts with PLK2, leading to disrupt the interaction with GRIA2. Interacts with MUSK; may regulate MUSK endocytosis and activity. Interacts with CDK16. Requires Mg(2+) as cofactor. In terms of processing, phosphorylation at Ser-569 interferes with homohexamerization.

The protein resides in the cytoplasm. The enzyme catalyses ATP + H2O = ADP + phosphate + H(+). Its function is as follows. Required for vesicle-mediated transport. Catalyzes the fusion of transport vesicles within the Golgi cisternae. Is also required for transport from the endoplasmic reticulum to the Golgi stack. Seems to function as a fusion protein required for the delivery of cargo proteins to all compartments of the Golgi stack independent of vesicle origin. Interaction with AMPAR subunit GRIA2 leads to influence GRIA2 membrane cycling. The polypeptide is Vesicle-fusing ATPase (NSF) (Pongo abelii (Sumatran orangutan)).